Consider the following 579-residue polypeptide: YTH domain-containing family protein 2 (579 aa).

The disordered stretch occupies residues 1–45 (MSASSLLEQRPKGQGNKVQNGSVHQKDGLNDDDFEPYLSPQARPN). The residue at position 2 (S2) is an N-acetylserine. 6 positions are modified to phosphoserine: S2, S4, S5, S22, S39, and S196. The localization to mRNA processing bodies (P-bodies) stretch occupies residues 2–384 (SASSLLEQRP…QAGSGSTPSE (383 aa)). A disordered region spans residues 247–387 (AKQQPKLKTK…SGSTPSEPHP (141 aa)). A compositionally biased stretch (polar residues) spans 291-316 (ALVQNIGQPTQGSPQHVGQQANNSPP). Residues 337–349 (AQLSVQQQAAQPT) show a composition bias toward low complexity. S359 carries the post-translational modification Phosphoserine. Positions 359–371 (SGFGHNGVDGNGV) are enriched in gly residues. Polar residues predominate over residues 372-383 (GQSQAGSGSTPS). The interval 385–579 (PHPVLEKLRS…VKKERQGRGK (195 aa)) is interaction with m6A-containing mRNAs. At S394 the chain carries Phosphoserine. Residues 410–544 (GRVFIIKSYS…EKAKQVLKII (135 aa)) form the YTH domain. RNA-binding positions include 416 to 418 (KSY), D422, 432 to 433 (WC), N462, W486, and W491.

It belongs to the YTHDF family. YTHDF2 subfamily. Interacts with CNOT1; interaction is direct and promotes recruitment of the CCR4-NOT complex. Interacts with YTHDF3. Interacts with RIDA/HRSP12; interaction leads to recruitment of the ribonuclease P/MRP complex. Ubiquitinated by the SCF(SKP2) complex, leading to its degradation.

The protein localises to the cytoplasm. It is found in the cytosol. It localises to the P-body. The protein resides in the stress granule. Its subcellular location is the nucleus. Its function is as follows. Specifically recognizes and binds N6-methyladenosine (m6A)-containing RNAs, and regulates their stability. M6A is a modification present at internal sites of mRNAs and some non-coding RNAs and plays a role in mRNA stability and processing. Acts as a regulator of mRNA stability by promoting degradation of m6A-containing mRNAs via interaction with the CCR4-NOT and ribonuclease P/MRP complexes, depending on the context. The YTHDF paralogs (YTHDF1, YTHDF2 and YTHDF3) share m6A-containing mRNAs targets and act redundantly to mediate mRNA degradation and cellular differentiation. M6A-containing mRNAs containing a binding site for RIDA/HRSP12 (5'-GGUUC-3') are preferentially degraded by endoribonucleolytic cleavage: cooperative binding of RIDA/HRSP12 and YTHDF2 to transcripts leads to recruitment of the ribonuclease P/MRP complex. Other m6A-containing mRNAs undergo deadenylation via direct interaction between YTHDF2 and CNOT1, leading to recruitment of the CCR4-NOT and subsequent deadenylation of m6A-containing mRNAs. Required maternally to regulate oocyte maturation: probably acts by binding to m6A-containing mRNAs, thereby regulating maternal transcript dosage during oocyte maturation, which is essential for the competence of oocytes to sustain early zygotic development. Also required during spermatogenesis: regulates spermagonial adhesion by promoting degradation of m6A-containing transcripts coding for matrix metallopeptidases. Also involved in hematopoietic stem cells specification by binding to m6A-containing mRNAs, leading to promote their degradation. Also acts as a regulator of neural development by promoting m6A-dependent degradation of neural development-related mRNA targets. Inhibits neural specification of induced pluripotent stem cells by binding to methylated neural-specific mRNAs and promoting their degradation, thereby restraining neural differentiation. Regulates circadian regulation of hepatic lipid metabolism: acts by promoting m6A-dependent degradation of PPARA transcripts. Regulates the innate immune response to infection by inhibiting the type I interferon response: acts by binding to m6A-containing IFNB transcripts and promoting their degradation. May also act as a promoter of cap-independent mRNA translation following heat shock stress: upon stress, relocalizes to the nucleus and specifically binds mRNAs with some m6A methylation mark at their 5'-UTR, protecting demethylation of mRNAs by FTO, thereby promoting cap-independent mRNA translation. Regulates mitotic entry by promoting the phase-specific m6A-dependent degradation of WEE1 transcripts. Promotes formation of phase-separated membraneless compartments, such as P-bodies or stress granules, by undergoing liquid-liquid phase separation upon binding to mRNAs containing multiple m6A-modified residues: polymethylated mRNAs act as a multivalent scaffold for the binding of YTHDF proteins, juxtaposing their disordered regions and thereby leading to phase separation. The resulting mRNA-YTHDF complexes then partition into different endogenous phase-separated membraneless compartments, such as P-bodies, stress granules or neuronal RNA granules. May also recognize and bind RNAs modified by C5-methylcytosine (m5C) and act as a regulator of rRNA processing. The sequence is that of YTH domain-containing family protein 2 from Macaca fascicularis (Crab-eating macaque).